Here is a 279-residue protein sequence, read N- to C-terminus: Diaminopimelate epimerase (279 aa).

Positions 13 and 66 each coordinate substrate. The active-site Proton donor is Cys-75. Substrate is bound by residues 76–77 (GN), Asn-164, Asn-197, and 215–216 (ER). Cys-224 functions as the Proton acceptor in the catalytic mechanism. 225–226 (GT) serves as a coordination point for substrate.

Belongs to the diaminopimelate epimerase family. As to quaternary structure, homodimer.

The protein resides in the cytoplasm. It catalyses the reaction (2S,6S)-2,6-diaminopimelate = meso-2,6-diaminopimelate. Its pathway is amino-acid biosynthesis; L-lysine biosynthesis via DAP pathway; DL-2,6-diaminopimelate from LL-2,6-diaminopimelate: step 1/1. Functionally, catalyzes the stereoinversion of LL-2,6-diaminopimelate (L,L-DAP) to meso-diaminopimelate (meso-DAP), a precursor of L-lysine and an essential component of the bacterial peptidoglycan. In Brachyspira hyodysenteriae (strain ATCC 49526 / WA1), this protein is Diaminopimelate epimerase.